The primary structure comprises 84 residues: Cytochrome b559 subunit alpha (84 aa).

The chain crosses the membrane as a helical span at residues Val22–Trp36. His24 serves as a coordination point for heme.

Belongs to the PsbE/PsbF family. As to quaternary structure, heterodimer of an alpha subunit and a beta subunit. PSII is composed of 1 copy each of membrane proteins PsbA, PsbB, PsbC, PsbD, PsbE, PsbF, PsbH, PsbI, PsbJ, PsbK, PsbL, PsbM, PsbT, PsbX, PsbY, PsbZ, Psb30/Ycf12, at least 3 peripheral proteins of the oxygen-evolving complex and a large number of cofactors. It forms dimeric complexes. It depends on heme b as a cofactor.

The protein localises to the plastid. It is found in the chloroplast thylakoid membrane. In terms of biological role, this b-type cytochrome is tightly associated with the reaction center of photosystem II (PSII). PSII is a light-driven water:plastoquinone oxidoreductase that uses light energy to abstract electrons from H(2)O, generating O(2) and a proton gradient subsequently used for ATP formation. It consists of a core antenna complex that captures photons, and an electron transfer chain that converts photonic excitation into a charge separation. This Gracilaria tenuistipitata var. liui (Red alga) protein is Cytochrome b559 subunit alpha.